Consider the following 276-residue polypeptide: MATFRLALIQLQVSSIKSENLTRACGLIREASKQGAQIVSLPECFNSPYGTKYFPDYAEKIPGDSTQKLSEVAKECSMYVIGGSIPEKDAGKLYNTCAVFGPDGTLLVKHRKLHLFDIDVPGKITFQESETLSPGDSFSLFDTPYCRVGLGICYDIRFAELAQIYAQRGCQLLVYPGAFNLTTGPAHWELLQRGRAVDNQVYVATASPARDEKASYVAWGHSTVVNPWGEVLAKAGTEETIVYADIDLKKLAEIRQQIPIFSQKRSDLYEVEAKKS.

Residues 4–248 form the CN hydrolase domain; the sequence is FRLALIQLQV…ETIVYADIDL (245 aa). Residue glutamate 43 is the Proton acceptor of the active site. Residue lysine 68 is modified to N6-acetyllysine; alternate. The residue at position 68 (lysine 68) is an N6-succinyllysine; alternate. Lysine 112 acts as the Proton donor in catalysis. Position 123 is an N6-succinyllysine (lysine 123). Cysteine 153 (nucleophile) is an active-site residue.

This sequence belongs to the carbon-nitrogen hydrolase superfamily. NIT1/NIT2 family. Homodimer.

Its subcellular location is the cytoplasm. The enzyme catalyses 2-oxoglutaramate + H2O = 2-oxoglutarate + NH4(+). It carries out the reaction 2-oxosuccinamate + H2O = oxaloacetate + NH4(+). In terms of biological role, has omega-amidase activity. The role of omega-amidase is to remove potentially toxic intermediates by converting 2-oxoglutaramate and 2-oxosuccinamate to biologically useful 2-oxoglutarate and oxaloacetate, respectively. In Bos taurus (Bovine), this protein is Omega-amidase NIT2 (NIT2).